Here is a 551-residue protein sequence, read N- to C-terminus: L-lactate permease (551 aa).

The next 12 membrane-spanning stretches (helical) occupy residues 13 to 33 (NIWL…FALI), 37 to 57 (LKGY…ALLF), 70 to 90 (VYGF…AVFV), 131 to 151 (GAAG…GLGF), 159 to 179 (LCLI…PILV), 194 to 214 (MVGR…MAIM), 244 to 264 (FIGP…CLTL), 366 to 386 (FDWF…SIVW), 405 to 425 (LALP…SNYS), 438 to 458 (TGHA…FLTG), 494 to 514 (VTGK…VGLV), and 530 to 550 (IFTC…TWMI).

The protein belongs to the lactate permease family.

The protein localises to the cell inner membrane. The catalysed reaction is (S)-lactate(in) + H(+)(in) = (S)-lactate(out) + H(+)(out). It carries out the reaction (R)-lactate(in) + H(+)(in) = (R)-lactate(out) + H(+)(out). The enzyme catalyses glycolate(in) + H(+)(in) = glycolate(out) + H(+)(out). Uptake of L-lactate across the membrane. Can also transport D-lactate and glycolate. Seems to be driven by a proton motive force. This Escherichia coli O6:H1 (strain CFT073 / ATCC 700928 / UPEC) protein is L-lactate permease (lldP).